The sequence spans 765 residues: Putative ankyrin repeat protein L371 (765 aa).

ANK repeat units lie at residues 60–89 (NGNYMIFFAIIMNSSTILKKLIKYGARLDV), 93–122 (EGNSVMYYPIKFGYYEIIDVLIDYDSKIIG), 132–161 (KGSVPLFYAIKYRNKYALQQLLSKDANANY), 165–194 (DNVNALHMAVLKKDISMVKLVIKHIKNLNA), 198–227 (QGSTALHYACNFQLYDITKLLLDNGADQNI), 232–261 (LDFYPIFYSVIQNDINISKLLVDYGANPNH), 265–295 (EGNTILHYCVIYNHMEIFDYIMNNYVIRCRS), 322–353 (DGLTVVHLMLYDYKEEYDNFLKKLIPYCNLNY), and 357–395 (TGNTILHLIAENNIWNKFDNLLNVKKLNIFIRNNNGKTV).

The chain is Putative ankyrin repeat protein L371 from Acanthamoeba polyphaga mimivirus (APMV).